We begin with the raw amino-acid sequence, 117 residues long: Ubiquitin-like protein pmt3/smt3 (117 aa).

Positions 1–37 are disordered; it reads MSESPSANISDADKSAITPTTGDTSQQDVKPSTEHIN. A compositionally biased stretch (polar residues) spans 17-30; the sequence is ITPTTGDTSQQDVK. The Ubiquitin-like domain occupies 35–115; that stretch reads HINLKVVGQD…LEQLGGCTHL (81 aa). Gly-111 participates in a covalent cross-link: Glycyl lysine isopeptide (Gly-Lys) (interchain with K-? in acceptor proteins). Positions 112 to 117 are excised as a propeptide; it reads CTHLCL.

The protein belongs to the ubiquitin family. SUMO subfamily. Interacts with rfp1.

The protein resides in the nucleus. Functionally, required for chromosome segregation where it may be involved in microtubule assembly. Loss of smt3 leads to an increase in telomere length. The sequence is that of Ubiquitin-like protein pmt3/smt3 (pmt3) from Schizosaccharomyces pombe (strain 972 / ATCC 24843) (Fission yeast).